Consider the following 87-residue polypeptide: Small ribosomal subunit protein uS15 (87 aa).

Basic and acidic residues predominate over residues 1–19; that stretch reads MEKARKEQLIREYATHEGD. Residues 1–22 are disordered; that stretch reads MEKARKEQLIREYATHEGDTGS.

The protein belongs to the universal ribosomal protein uS15 family. Part of the 30S ribosomal subunit. Forms a bridge to the 50S subunit in the 70S ribosome, contacting the 23S rRNA.

In terms of biological role, one of the primary rRNA binding proteins, it binds directly to 16S rRNA where it helps nucleate assembly of the platform of the 30S subunit by binding and bridging several RNA helices of the 16S rRNA. Functionally, forms an intersubunit bridge (bridge B4) with the 23S rRNA of the 50S subunit in the ribosome. This Clostridium novyi (strain NT) protein is Small ribosomal subunit protein uS15.